The following is a 502-amino-acid chain: Putative diacyglycerol O-acyltransferase Rv1760 (502 aa).

H174 (proton acceptor) is an active-site residue.

It belongs to the long-chain O-acyltransferase family.

The enzyme catalyses an acyl-CoA + a 1,2-diacyl-sn-glycerol = a triacyl-sn-glycerol + CoA. The catalysed reaction is di-(9Z)-octadecenoylglycerol + (9Z)-octadecenoyl-CoA = 1,2,3-tri-(9Z-octadecenoyl)-glycerol + CoA. Its pathway is glycerolipid metabolism; triacylglycerol biosynthesis. Its function is as follows. Catalyzes the terminal and only committed step in triacylglycerol synthesis by using diacylglycerol and fatty acyl CoA as substrates. Required for storage lipid synthesis. Upon expression in E.coli functions weakly as a triacylglycerol synthase, making triacylglycerol (TG) from diolein and long-chain fatty acyl-CoA. Has very weak wax synthase activity, incorporating palmityl alcohol into wax esters in the presence of palmitoyl-CoA. The chain is Putative diacyglycerol O-acyltransferase Rv1760 from Mycobacterium tuberculosis (strain ATCC 25618 / H37Rv).